Reading from the N-terminus, the 92-residue chain is Cell division protein FtsB (92 aa).

Topologically, residues 1–3 (MRL) are cytoplasmic. A helical transmembrane segment spans residues 4 to 21 (LILILLSVLVLFQYNFWF). Over 22–92 (GSNGFLDYRQ…VFYHIVKESK (71 aa)) the chain is Periplasmic. Positions 28–63 (DYRQNAEKIKENQAENEKLSQRNQRINAEIQGLTKG) form a coiled coil.

Belongs to the FtsB family. As to quaternary structure, part of a complex composed of FtsB, FtsL and FtsQ.

Its subcellular location is the cell inner membrane. In terms of biological role, essential cell division protein. May link together the upstream cell division proteins, which are predominantly cytoplasmic, with the downstream cell division proteins, which are predominantly periplasmic. The sequence is that of Cell division protein FtsB from Haemophilus influenzae (strain 86-028NP).